The primary structure comprises 398 residues: Leucine carboxyl methyltransferase 1 (398 aa).

Positions 1-11 (MSASQIPNLNT) are enriched in polar residues. The interval 1-54 (MSASQIPNLNTLRRGGGRGRLRGRGGFETGAPSEDRHGSRGLAAQDRVVQGTDN) is disordered. S-adenosyl-L-methionine is bound by residues Arg-97, Gly-123, Asp-151, and 201–202 (DL). The span at 208-218 (SGSATTSRSPS) shows a compositional bias: low complexity. The interval 208 to 232 (SGSATTSRSPSSPNPAEKDQPPCPL) is disordered. An S-adenosyl-L-methionine-binding site is contributed by Glu-246.

It belongs to the methyltransferase superfamily. LCMT family.

The enzyme catalyses [phosphatase 2A protein]-C-terminal L-leucine + S-adenosyl-L-methionine = [phosphatase 2A protein]-C-terminal L-leucine methyl ester + S-adenosyl-L-homocysteine. Functionally, methylates the carboxyl group of the C-terminal leucine residue of protein phosphatase 2A catalytic subunits to form alpha-leucine ester residues. The sequence is that of Leucine carboxyl methyltransferase 1 (ppm1) from Aspergillus fumigatus (strain ATCC MYA-4609 / CBS 101355 / FGSC A1100 / Af293) (Neosartorya fumigata).